The chain runs to 123 residues: Fluoride-specific ion channel FluC (123 aa).

Helical transmembrane passes span 5–25 (IIAL…YISG), 35–55 (IGTL…YGLL), 67–87 (IFLG…SYET), and 100–120 (FANI…GFIL). Na(+) contacts are provided by Gly-75 and Ser-78.

Belongs to the fluoride channel Fluc/FEX (TC 1.A.43) family.

It localises to the cell membrane. It catalyses the reaction fluoride(in) = fluoride(out). With respect to regulation, na(+) is not transported, but it plays an essential structural role and its presence is essential for fluoride channel function. Fluoride-specific ion channel. Important for reducing fluoride concentration in the cell, thus reducing its toxicity. This chain is Fluoride-specific ion channel FluC, found in Pyrococcus horikoshii (strain ATCC 700860 / DSM 12428 / JCM 9974 / NBRC 100139 / OT-3).